The sequence spans 261 residues: MSIESLNAFSMDFFSLKGKTAIVTGGNSGLGQAFAMALAKAGANIFIPSFVKDNGETKEMIEKQGVEVDFMQVGITAEGAPQKIIAACCERFGTVDILVNNAGICKLNKVLDFGRADWDPMIDVNLTAAFELSYEAAKIMIPQKSGKIINICSLFSYLGGQWSPAYSATKHALAGFTKAYCDELGQYNIQVNGIAPGYYATDITLATRSNPETNQRVLDHIPANRWGDTQDLMGAAVFLASPASNYVNGHLLVVDGGYLVR.

22–46 (IVTGGNSGLGQAFAMALAKAGANIF) serves as a coordination point for NADP(+). Ser153 contributes to the substrate binding site. Tyr166 functions as the Proton acceptor in the catalytic mechanism.

The protein belongs to the short-chain dehydrogenases/reductases (SDR) family.

This is an uncharacterized protein from Escherichia coli (strain K12).